Here is a 62-residue protein sequence, read N- to C-terminus: Negative regulatory protein YxlE (62 aa).

2 consecutive transmembrane segments (helical) span residues 7 to 27 (MILP…ISCI) and 37 to 57 (WMWA…FFTV).

The protein resides in the cell membrane. Functionally, together with YxlD is important for negative regulation of sigma Y activity. This chain is Negative regulatory protein YxlE (yxlE), found in Bacillus subtilis (strain 168).